Reading from the N-terminus, the 64-residue chain is UPF0337 protein SAR0874 (64 aa).

Positions 1–40 (MADESKFEQAKGNVKETVGNVTDNKNLENEGKEDKASGKA) are disordered. A compositionally biased stretch (basic and acidic residues) spans 25 to 40 (KNLENEGKEDKASGKA).

It belongs to the UPF0337 (CsbD) family.

The protein is UPF0337 protein SAR0874 of Staphylococcus aureus (strain MRSA252).